Here is a 459-residue protein sequence, read N- to C-terminus: MSNKAWGGRFEVQPEEWVDDFNASITFDQTLIDQDIEGSIAHATMLANQGIISQQDSEQIIQGLKSIQHDYHQDQIQFSASLEDIHLNIEHELIKRIGDAGGKLHTGRSRNDQVATDMHLYTKKQVQDIIALIKSLQSVIVDIASNNVDTIMPSYTHLQRAQPISFAHHIMTYFWMLQRDQQRFEDSLKRIDINPLGAAALSGTTYPIDRHETTALLNFGSLYENSLDAVSDRDYIIETLHNISLTMVHLSRFAEEIIFWSTDEAKFITLSDAFSTGSSIMPQKKNPDMAELIRGKVGRTTGHLMSMLMTLKGLPLAYNKDMQEDKEGLFDAVHTIKGSLRIFEGMIQTMTINKERLNQTVKEDFSNATELADYLVTKNIPFRTAHEIVGKIVLECIQQGHYLLDVPLATYQQHHSSIDADIYDYLQPENCLKRRQSYGSTGQSSVKQQLDVAKQLLSQ.

The protein belongs to the lyase 1 family. Argininosuccinate lyase subfamily.

Its subcellular location is the cytoplasm. The catalysed reaction is 2-(N(omega)-L-arginino)succinate = fumarate + L-arginine. It participates in amino-acid biosynthesis; L-arginine biosynthesis; L-arginine from L-ornithine and carbamoyl phosphate: step 3/3. The sequence is that of Argininosuccinate lyase from Staphylococcus aureus (strain USA300).